Reading from the N-terminus, the 165-residue chain is Crossover junction endodeoxyribonuclease RuvC (165 aa).

Residues aspartate 7, glutamate 68, and histidine 142 contribute to the active site. The Mg(2+) site is built by aspartate 7, glutamate 68, and histidine 142.

The protein belongs to the RuvC family. Homodimer which binds Holliday junction (HJ) DNA. The HJ becomes 2-fold symmetrical on binding to RuvC with unstacked arms; it has a different conformation from HJ DNA in complex with RuvA. In the full resolvosome a probable DNA-RuvA(4)-RuvB(12)-RuvC(2) complex forms which resolves the HJ. Mg(2+) is required as a cofactor.

It is found in the cytoplasm. The catalysed reaction is Endonucleolytic cleavage at a junction such as a reciprocal single-stranded crossover between two homologous DNA duplexes (Holliday junction).. Functionally, the RuvA-RuvB-RuvC complex processes Holliday junction (HJ) DNA during genetic recombination and DNA repair. Endonuclease that resolves HJ intermediates. Cleaves cruciform DNA by making single-stranded nicks across the HJ at symmetrical positions within the homologous arms, yielding a 5'-phosphate and a 3'-hydroxyl group; requires a central core of homology in the junction. The consensus cleavage sequence is 5'-(A/T)TT(C/G)-3'. Cleavage occurs on the 3'-side of the TT dinucleotide at the point of strand exchange. HJ branch migration catalyzed by RuvA-RuvB allows RuvC to scan DNA until it finds its consensus sequence, where it cleaves and resolves the cruciform DNA. The protein is Crossover junction endodeoxyribonuclease RuvC of Anaplasma marginale (strain Florida).